A 150-amino-acid polypeptide reads, in one-letter code: Large ribosomal subunit protein uL15 (150 aa).

A disordered region spans residues Met-1 to Met-60. Basic residues predominate over residues Thr-30–Lys-39. Positions Gly-44–Gly-53 are enriched in basic and acidic residues.

This sequence belongs to the universal ribosomal protein uL15 family. In terms of assembly, part of the 50S ribosomal subunit.

In terms of biological role, binds to the 23S rRNA. This Thermus thermophilus (strain ATCC BAA-163 / DSM 7039 / HB27) protein is Large ribosomal subunit protein uL15.